Consider the following 394-residue polypeptide: 4-O-methyl-glucuronoyl methylesterase (394 aa).

The signal sequence occupies residues 1–18 (MVHLTPALLLASAAFAAA). Intrachain disulfides connect C29/C63, C210/C345, and C242/C317. Residues 209–214 (GCSRNG) carry the GXSYXG catalytic site motif motif. Residue S211 is the Nucleophile of the active site. Residues K215, Q257, E265, and W308 each contribute to the substrate site. The active-site Proton donor/acceptor is the H344.

The protein belongs to the carbohydrate esterase 15 (CE15) family.

It localises to the secreted. The enzyme catalyses a 4-O-methyl-alpha-D-glucuronosyl ester derivative + H2O = 4-O-methyl-alpha-D-glucuronate derivative + an alcohol + H(+). Functionally, glucuronoyl esterase which may play a significant role in biomass degradation, as it is considered to disconnect hemicellulose from lignin through the hydrolysis of the ester bond between 4-O-methyl-D-glucuronic acid residues of glucuronoxylans and aromatic alcohols of lignin. In Neurospora crassa (strain ATCC 24698 / 74-OR23-1A / CBS 708.71 / DSM 1257 / FGSC 987), this protein is 4-O-methyl-glucuronoyl methylesterase.